Reading from the N-terminus, the 288-residue chain is Bifunctional protein FolD (288 aa).

NADP(+)-binding positions include Gly-166–Ser-168, Ser-191, and Ile-232.

The protein belongs to the tetrahydrofolate dehydrogenase/cyclohydrolase family. Homodimer.

The enzyme catalyses (6R)-5,10-methylene-5,6,7,8-tetrahydrofolate + NADP(+) = (6R)-5,10-methenyltetrahydrofolate + NADPH. The catalysed reaction is (6R)-5,10-methenyltetrahydrofolate + H2O = (6R)-10-formyltetrahydrofolate + H(+). The protein operates within one-carbon metabolism; tetrahydrofolate interconversion. In terms of biological role, catalyzes the oxidation of 5,10-methylenetetrahydrofolate to 5,10-methenyltetrahydrofolate and then the hydrolysis of 5,10-methenyltetrahydrofolate to 10-formyltetrahydrofolate. The polypeptide is Bifunctional protein FolD (Rickettsia massiliae (strain Mtu5)).